Reading from the N-terminus, the 330-residue chain is G-protein coupled receptor 3 (330 aa).

Topologically, residues 1–42 (MMWGAGSPLAWLSAGSGNVNVSSVGPAEGPTGPAAPLPSPKA) are extracellular. N-linked (GlcNAc...) asparagine glycosylation occurs at Asn-20. The chain crosses the membrane as a helical span at residues 43–62 (WDVVLCISGTLVSCENALVV). Residues 63–74 (AIIVGTPAFRAP) lie on the Cytoplasmic side of the membrane. A helical transmembrane segment spans residues 75–98 (MFLLVGSLAVADLLAGLGLVLHFA). Over 99–110 (AVFCIGSAEMSL) the chain is Extracellular. A helical transmembrane segment spans residues 111-132 (VLVGVLAMAFTASIGSLLAITV). The Cytoplasmic portion of the chain corresponds to 133–153 (DRYLSLYNALTYYSETTVTRT). The chain crosses the membrane as a helical span at residues 154-173 (YVMLALVWGGALGLGLLPVL). Topologically, residues 174–198 (AWNCLDGLTTCGVVYPLSKNHLVVL) are extracellular. A helical transmembrane segment spans residues 199-217 (AIAFFMVFGIMLQLYAQIC). Residues 218-245 (RIVCRHAQQIALQRHLLPASHYVATRKG) are Cytoplasmic-facing. Residues 246–272 (IATLAVVLGAFAACWLPFTVYCLLGDA) form a helical membrane-spanning segment. At 273–277 (HSPPL) the chain is on the extracellular side. A helical transmembrane segment spans residues 278-299 (YTYLTLLPATYNSMINPIIYAF). Topologically, residues 300–330 (RNQDVQKVLWAVCCCCSSSKIPFRSRSPSDV) are cytoplasmic. Residue Cys-313 is the site of S-palmitoyl cysteine attachment. Residues Ser-324, Ser-326, and Ser-328 each carry the phosphoserine modification.

Belongs to the G-protein coupled receptor 1 family. In terms of tissue distribution, expressed predominantly in the central nervous system, and at low levels in the lung, kidney, testis, ovary and eye. Highly expressed in regions of the brain implicated in the Alzheimer disease.

The protein resides in the cell membrane. Functionally, constitutively active G-protein coupled receptor that maintains high 3'-5'-cyclic adenosine monophosphate (cAMP) levels that a plays a role in serveral processes including meiotic arrest in oocytes or neuronal development via activation of numerous intracellular signaling pathways. Acts as an essential activator of thermogenic adipocytes and drives thermogenesis via its intrinsic G(s)-coupling activity without the requirement of a ligand. Has a potential role in modulating a number of brain functions, including behavioral responses to stress, amyloid-beta peptide generation in neurons. Stimulates neurite outgrowth in cerebellar granular neurons modulated via PKA, ERK, and most strongly PI3K-mediated signaling pathways. The chain is G-protein coupled receptor 3 (GPR3) from Homo sapiens (Human).